Reading from the N-terminus, the 159-residue chain is SsrA-binding protein (159 aa).

Residues 131 to 148 are compositionally biased toward basic and acidic residues; it reads YDKRQTLREKQDRREAER. A disordered region spans residues 131–159; sequence YDKRQTLREKQDRREAERTISAIKRKQRA.

It belongs to the SmpB family.

Its subcellular location is the cytoplasm. In terms of biological role, required for rescue of stalled ribosomes mediated by trans-translation. Binds to transfer-messenger RNA (tmRNA), required for stable association of tmRNA with ribosomes. tmRNA and SmpB together mimic tRNA shape, replacing the anticodon stem-loop with SmpB. tmRNA is encoded by the ssrA gene; the 2 termini fold to resemble tRNA(Ala) and it encodes a 'tag peptide', a short internal open reading frame. During trans-translation Ala-aminoacylated tmRNA acts like a tRNA, entering the A-site of stalled ribosomes, displacing the stalled mRNA. The ribosome then switches to translate the ORF on the tmRNA; the nascent peptide is terminated with the 'tag peptide' encoded by the tmRNA and targeted for degradation. The ribosome is freed to recommence translation, which seems to be the essential function of trans-translation. In Streptomyces coelicolor (strain ATCC BAA-471 / A3(2) / M145), this protein is SsrA-binding protein.